Consider the following 778-residue polypeptide: Centromere/kinetochore protein zw10 homolog (778 aa).

The stretch at 47–99 (FDRLENLEDIAEMSTRNLSNLIDQTAKDSPEMLAEIKSQAQSCENLVEFLQSM) forms a coiled coil.

Belongs to the ZW10 family. Component of the RZZ complex composed of rod-1, czw-1 and zwl-1.

The protein resides in the chromosome. It is found in the centromere. The protein localises to the kinetochore. Its subcellular location is the cytoplasm. It localises to the cytoskeleton. The protein resides in the spindle. Essential component of the mitotic checkpoint, which prevents cells from prematurely exiting mitosis. Required for the assembly of the dynein-dynactin and mdf-1-mdf-2 complexes onto kinetochores. Its function related to the spindle assembly machinery and kinetochore-microtubule attachments likely depends on its association in the mitotic RZZ complex. The RZZ complex recruits the spindly-like protein spdl-1 to kinetochores. To prevent irregular chromosome segregation, the complex also inhibits the attachment of the kinetochore-associated NDC80 complex to microtubules. The recruitment of spdl-1 to kinetochores relieves this inhibition. Required for embryonic development. The chain is Centromere/kinetochore protein zw10 homolog from Caenorhabditis elegans.